The chain runs to 618 residues: DNA mismatch repair protein MutL (618 aa).

Positions 367-378 (EPTAAREPATPR) are enriched in low complexity. Residues 367-402 (EPTAAREPATPRYSGGASGGNGGRQTAGGWPHAQPG) are disordered. A compositionally biased stretch (gly residues) spans 382–392 (GASGGNGGRQT).

The protein belongs to the DNA mismatch repair MutL/HexB family.

Functionally, this protein is involved in the repair of mismatches in DNA. It is required for dam-dependent methyl-directed DNA mismatch repair. May act as a 'molecular matchmaker', a protein that promotes the formation of a stable complex between two or more DNA-binding proteins in an ATP-dependent manner without itself being part of a final effector complex. The protein is DNA mismatch repair protein MutL of Salmonella choleraesuis (strain SC-B67).